A 213-amino-acid chain; its full sequence is ATP synthase subunit b 2 (213 aa).

The interval 1 to 45 (MFVTEAYAQSAPTVGETHTETPAVGQPQPEATHTETGVAHGAEHG) is disordered. A helical transmembrane segment spans residues 57–76 (TYASQVLWLAITFGLFYLLM).

The protein belongs to the ATPase B chain family. As to quaternary structure, F-type ATPases have 2 components, F(1) - the catalytic core - and F(0) - the membrane proton channel. F(1) has five subunits: alpha(3), beta(3), gamma(1), delta(1), epsilon(1). F(0) has three main subunits: a(1), b(2) and c(10-14). The alpha and beta chains form an alternating ring which encloses part of the gamma chain. F(1) is attached to F(0) by a central stalk formed by the gamma and epsilon chains, while a peripheral stalk is formed by the delta and b chains.

The protein localises to the cell inner membrane. Its function is as follows. F(1)F(0) ATP synthase produces ATP from ADP in the presence of a proton or sodium gradient. F-type ATPases consist of two structural domains, F(1) containing the extramembraneous catalytic core and F(0) containing the membrane proton channel, linked together by a central stalk and a peripheral stalk. During catalysis, ATP synthesis in the catalytic domain of F(1) is coupled via a rotary mechanism of the central stalk subunits to proton translocation. Functionally, component of the F(0) channel, it forms part of the peripheral stalk, linking F(1) to F(0). The b'-subunit is a diverged and duplicated form of b found in plants and photosynthetic bacteria. The chain is ATP synthase subunit b 2 (atpF2) from Agrobacterium fabrum (strain C58 / ATCC 33970) (Agrobacterium tumefaciens (strain C58)).